Consider the following 256-residue polypeptide: Proteasome subunit alpha (256 aa).

Residues 235–256 (ELDSNGSDGNGDAPELNGGSSD) form a disordered region.

It belongs to the peptidase T1A family. In terms of assembly, the 20S proteasome core is composed of 14 alpha and 14 beta subunits that assemble into four stacked heptameric rings, resulting in a barrel-shaped structure. The two inner rings, each composed of seven catalytic beta subunits, are sandwiched by two outer rings, each composed of seven alpha subunits. The catalytic chamber with the active sites is on the inside of the barrel. Has a gated structure, the ends of the cylinder being occluded by the N-termini of the alpha-subunits. Is capped by the proteasome-associated ATPase, ARC.

The protein resides in the cytoplasm. It functions in the pathway protein degradation; proteasomal Pup-dependent pathway. With respect to regulation, the formation of the proteasomal ATPase ARC-20S proteasome complex, likely via the docking of the C-termini of ARC into the intersubunit pockets in the alpha-rings, may trigger opening of the gate for substrate entry. Interconversion between the open-gate and close-gate conformations leads to a dynamic regulation of the 20S proteasome proteolysis activity. In terms of biological role, component of the proteasome core, a large protease complex with broad specificity involved in protein degradation. This is Proteasome subunit alpha from Mycolicibacterium paratuberculosis (strain ATCC BAA-968 / K-10) (Mycobacterium paratuberculosis).